A 634-amino-acid chain; its full sequence is tRNA uridine 5-carboxymethylaminomethyl modification enzyme MnmG (634 aa).

13–18 (GAGHAG) is an FAD binding site. 273–287 (GPRYCPSIEDKIIKF) provides a ligand contact to NAD(+).

It belongs to the MnmG family. In terms of assembly, homodimer. Heterotetramer of two MnmE and two MnmG subunits. FAD serves as cofactor.

Its subcellular location is the cytoplasm. Its function is as follows. NAD-binding protein involved in the addition of a carboxymethylaminomethyl (cmnm) group at the wobble position (U34) of certain tRNAs, forming tRNA-cmnm(5)s(2)U34. The sequence is that of tRNA uridine 5-carboxymethylaminomethyl modification enzyme MnmG from Buchnera aphidicola subsp. Cinara cedri (strain Cc).